Consider the following 233-residue polypeptide: MELTEFEARVIGCLLEKEVTTPDQYPLSLNALTLACNQKSSREPVMSLTESQVQASLDELAKKRLVSEQSGFGSRVVKYKHRFCNTEFSELQFSSAELSLICLLLLRGPQTPGELKSRSQRLHEFSHVSEVEHCLYSLSQSDKPHVAMLAREPNKREHRYIELFSHGVSEALTLAADTQHQRPPQTPHLSSRTNVDNSYESDERFTQLEGRINQLEQQVASLEAKLLGLLSNT.

Residues 178–198 (TQHQRPPQTPHLSSRTNVDNS) are compositionally biased toward polar residues. The interval 178 to 204 (TQHQRPPQTPHLSSRTNVDNSYESDER) is disordered.

Belongs to the UPF0502 family.

This is UPF0502 protein Sden_2282 from Shewanella denitrificans (strain OS217 / ATCC BAA-1090 / DSM 15013).